The following is an 81-amino-acid chain: Photosystem I iron-sulfur center (81 aa).

4Fe-4S ferredoxin-type domains are found at residues 2 to 31 and 39 to 68; these read SHTV…MVPW and IASA…VRVY. [4Fe-4S] cluster is bound by residues cysteine 11, cysteine 14, cysteine 17, cysteine 21, cysteine 48, cysteine 51, cysteine 54, and cysteine 58.

In terms of assembly, the eukaryotic PSI reaction center is composed of at least 11 subunits. The cofactor is [4Fe-4S] cluster.

It is found in the plastid. The protein resides in the chloroplast thylakoid membrane. The enzyme catalyses reduced [plastocyanin] + hnu + oxidized [2Fe-2S]-[ferredoxin] = oxidized [plastocyanin] + reduced [2Fe-2S]-[ferredoxin]. Apoprotein for the two 4Fe-4S centers FA and FB of photosystem I (PSI); essential for photochemical activity. FB is the terminal electron acceptor of PSI, donating electrons to ferredoxin. The C-terminus interacts with PsaA/B/D and helps assemble the protein into the PSI complex. Required for binding of PsaD and PsaE to PSI. PSI is a plastocyanin/cytochrome c6-ferredoxin oxidoreductase, converting photonic excitation into a charge separation, which transfers an electron from the donor P700 chlorophyll pair to the spectroscopically characterized acceptors A0, A1, FX, FA and FB in turn. The chain is Photosystem I iron-sulfur center from Chlorella vulgaris (Green alga).